A 133-amino-acid chain; its full sequence is U-scoloptoxin(11)-Sm1a (133 aa).

Residues 1–19 form the signal peptide; that stretch reads MIWFLAFILFLAAGELVSS.

This sequence belongs to the scoloptoxin-11 family. Post-translationally, contains 10 disulfide bonds. As to expression, expressed by the venom gland.

Its subcellular location is the secreted. This is U-scoloptoxin(11)-Sm1a from Scolopendra morsitans (Tanzanian blue ringleg centipede).